Consider the following 378-residue polypeptide: 8-demethyl-8-alpha-L-rhamnosyl tetracenomycin-C 2'-O-methyltransferase (378 aa).

Residues 195–201 (EIGVGGY), S210, D227, 245–246 (DQ), and D268 contribute to the S-adenosyl-L-methionine site. Mg(2+) is bound at residue D268. H271 (proton acceptor) is an active-site residue. 2 residues coordinate Mg(2+): E296 and D297.

The protein belongs to the methyltransferase OleY/MycE family. Mg(2+) is required as a cofactor.

It catalyses the reaction 8-demethyl-8-alpha-L-rhamnosyl-tetracenomycin C + S-adenosyl-L-methionine = 8-demethyl-8-(2-O-methyl-alpha-L-rhamnosyl)-tetracenomycin C + S-adenosyl-L-homocysteine + H(+). It participates in antibiotic biosynthesis. O-methyltransferase involved in the biosynthesis of the permethylated L-rhamnose moiety of elloramycin, an antitumor polyketide. Mediates the methylation of the hydroxy groups at the 2'-position after the sugar moiety has been attached to the aglycon. The sequence is that of 8-demethyl-8-alpha-L-rhamnosyl tetracenomycin-C 2'-O-methyltransferase from Streptomyces olivaceus.